The primary structure comprises 331 residues: Glycerol-3-phosphate dehydrogenase [NAD(P)+] (331 aa).

NADPH-binding residues include Ser-11, Phe-12, Arg-32, and Lys-106. The sn-glycerol 3-phosphate site is built by Lys-106, Gly-134, and Ser-136. Residue Ala-138 coordinates NADPH. The sn-glycerol 3-phosphate site is built by Lys-189, Asp-242, Ser-252, Arg-253, and Asn-254. The active-site Proton acceptor is the Lys-189. Residue Arg-253 participates in NADPH binding. NADPH-binding residues include Val-277 and Glu-279.

The protein belongs to the NAD-dependent glycerol-3-phosphate dehydrogenase family.

Its subcellular location is the cytoplasm. The catalysed reaction is sn-glycerol 3-phosphate + NAD(+) = dihydroxyacetone phosphate + NADH + H(+). It carries out the reaction sn-glycerol 3-phosphate + NADP(+) = dihydroxyacetone phosphate + NADPH + H(+). The protein operates within membrane lipid metabolism; glycerophospholipid metabolism. Functionally, catalyzes the reduction of the glycolytic intermediate dihydroxyacetone phosphate (DHAP) to sn-glycerol 3-phosphate (G3P), the key precursor for phospholipid synthesis. The sequence is that of Glycerol-3-phosphate dehydrogenase [NAD(P)+] from Clostridium perfringens (strain ATCC 13124 / DSM 756 / JCM 1290 / NCIMB 6125 / NCTC 8237 / Type A).